Reading from the N-terminus, the 82-residue chain is Small ribosomal subunit protein bS18 (82 aa).

The protein belongs to the bacterial ribosomal protein bS18 family. As to quaternary structure, part of the 30S ribosomal subunit. Forms a tight heterodimer with protein bS6.

Binds as a heterodimer with protein bS6 to the central domain of the 16S rRNA, where it helps stabilize the platform of the 30S subunit. The chain is Small ribosomal subunit protein bS18 from Sinorhizobium fredii (strain NBRC 101917 / NGR234).